A 142-amino-acid chain; its full sequence is Coactosin-like protein (142 aa).

Position 2 is an N-acetylalanine (alanine 2). In terms of domain architecture, ADF-H spans alanine 2 to lysine 130. The interval threonine 66 to lysine 75 is flexible and important for F-actin binding. Lysine 102 bears the N6-acetyllysine mark. A Phosphoserine modification is found at serine 141.

Belongs to the actin-binding proteins ADF family. Coactosin subfamily. Interacts with 5-lipoxygenase (ALOX5/5LO) in a calcium-independent manner. Binds to F-actin with a stoichiometry of 1:2.

It localises to the cytoplasm. The protein localises to the cytoskeleton. It is found in the nucleus. In terms of biological role, binds to F-actin in a calcium-independent manner. Has no direct effect on actin depolymerization. Acts as a chaperone for ALOX5 (5LO), influencing both its stability and activity in leukotrienes synthesis. The chain is Coactosin-like protein (Cotl1) from Mus musculus (Mouse).